A 154-amino-acid chain; its full sequence is Iron-sulfur cluster assembly 2 homolog, mitochondrial (154 aa).

The transit peptide at 1–8 (MAASRALS) directs the protein to the mitochondrion. Positions 79, 144, and 146 each coordinate Fe cation.

This sequence belongs to the HesB/IscA family. As to quaternary structure, heterotetramer; forms a dimer of dimers with IBA57. Interacts with [2Fe-2S]-ISCA2 forming the heterodimer [2Fe- 2S]-ISCA2-IBA57 complex; [2Fe-2S] cluster binding is absolutely required to promote the complex formation.

It is found in the mitochondrion. Involved in the maturation of mitochondrial 4Fe-4S proteins functioning late in the iron-sulfur cluster assembly pathway. May be involved in the binding of an intermediate of Fe/S cluster assembly. The sequence is that of Iron-sulfur cluster assembly 2 homolog, mitochondrial (Isca2) from Mus musculus (Mouse).